Consider the following 503-residue polypeptide: Glutamate--tRNA ligase 1 (503 aa).

A 'HIGH' region motif is present at residues 17–27; it reads PSPTGFLHIGN. Positions 261–265 match the 'KMSKS' region motif; that stretch reads KLSKR. Lys-264 contributes to the ATP binding site.

The protein belongs to the class-I aminoacyl-tRNA synthetase family. Glutamate--tRNA ligase type 1 subfamily. Monomer.

The protein localises to the cytoplasm. It carries out the reaction tRNA(Glu) + L-glutamate + ATP = L-glutamyl-tRNA(Glu) + AMP + diphosphate. Functionally, catalyzes the attachment of glutamate to tRNA(Glu) in a two-step reaction: glutamate is first activated by ATP to form Glu-AMP and then transferred to the acceptor end of tRNA(Glu). In Levilactobacillus brevis (strain ATCC 367 / BCRC 12310 / CIP 105137 / JCM 1170 / LMG 11437 / NCIMB 947 / NCTC 947) (Lactobacillus brevis), this protein is Glutamate--tRNA ligase 1.